Consider the following 847-residue polypeptide: DNA ligase (847 aa).

Residues 1–22 are compositionally biased toward low complexity; sequence MSDTTTGSDAADAAVPATTPAD. The interval 1 to 23 is disordered; it reads MSDTTTGSDAADAAVPATTPADL. Residues 54-58, 104-105, and Glu135 each bind NAD(+); these read DAEYD and SL. Lys137 serves as the catalytic N6-AMP-lysine intermediate. NAD(+)-binding residues include Arg158, Glu195, Lys326, and Lys350. Cys444, Cys447, Cys463, and Cys469 together coordinate Zn(2+). The region spanning 686-775 is the BRCT domain; the sequence is AAGGVLAGLA…PDAIALPEAD (90 aa). The tract at residues 770-847 is disordered; that stretch reads ALPEADPVPD…AEPDGPAETP (78 aa). 2 stretches are compositionally biased toward low complexity: residues 786 to 807 and 819 to 833; these read DGGSAEDATAATAGAAEAATAE and PAAAAAAPPTDVEAG.

This sequence belongs to the NAD-dependent DNA ligase family. LigA subfamily. Mg(2+) serves as cofactor. Requires Mn(2+) as cofactor.

It catalyses the reaction NAD(+) + (deoxyribonucleotide)n-3'-hydroxyl + 5'-phospho-(deoxyribonucleotide)m = (deoxyribonucleotide)n+m + AMP + beta-nicotinamide D-nucleotide.. In terms of biological role, DNA ligase that catalyzes the formation of phosphodiester linkages between 5'-phosphoryl and 3'-hydroxyl groups in double-stranded DNA using NAD as a coenzyme and as the energy source for the reaction. It is essential for DNA replication and repair of damaged DNA. The sequence is that of DNA ligase from Clavibacter sepedonicus (Clavibacter michiganensis subsp. sepedonicus).